We begin with the raw amino-acid sequence, 209 residues long: Octanoyltransferase (209 aa).

In terms of domain architecture, BPL/LPL catalytic spans 30 to 209; it reads DHEPEIIYLV…IQTEFNKIFK (180 aa). Substrate contacts are provided by residues 69–76, 143–145, and 156–158; these read RGGKFTFH, AIG, and GVA. C174 serves as the catalytic Acyl-thioester intermediate.

The protein belongs to the LipB family.

Its subcellular location is the cytoplasm. The catalysed reaction is octanoyl-[ACP] + L-lysyl-[protein] = N(6)-octanoyl-L-lysyl-[protein] + holo-[ACP] + H(+). Its pathway is protein modification; protein lipoylation via endogenous pathway; protein N(6)-(lipoyl)lysine from octanoyl-[acyl-carrier-protein]: step 1/2. Catalyzes the transfer of endogenously produced octanoic acid from octanoyl-acyl-carrier-protein onto the lipoyl domains of lipoate-dependent enzymes. Lipoyl-ACP can also act as a substrate although octanoyl-ACP is likely to be the physiological substrate. The sequence is that of Octanoyltransferase from Rickettsia peacockii (strain Rustic).